Here is a 618-residue protein sequence, read N- to C-terminus: NAD(P)H-quinone oxidoreductase subunit 5, organellar chromatophore 2 (618 aa).

17 helical membrane passes run 16–36, 43–63, 99–119, 129–149, 152–172, 190–210, 220–240, 267–287, 291–311, 318–335, 348–368, 390–410, 419–438, 461–481, 495–515, 553–573, and 597–617; these read LIPIYGFAGMVVSLPWATGWI, TPAYLNLIISLVAFLHGSLAL, LAALELITGLSFIAQLYALGY, FFALAGFFEGAMSGVVLSDSL, SYFLLEMLTLSTYLLVGFWYA, GDVMLLMGVVALSAFAGGMEF, NTLTPLATTLLGLALIAGPIG, SVVVTCGAIVLMKLMPILHHS, IAVLLAIGTISALGGSLVSIA, TLSYSTTAYLGLVFIAIA, AHAIAKALLSMSIGSVIAVSN, LIAGAGLTGLLPLGCFWCFGL, APWFASIYLITNTLTALNLT, WQMALPMVVLLVAVALTPWMM, AITGITVATSGLVGLTIGAIV, IVSGCSYIASWFDTAIVNGFV, and SYILTVVITIVFLLAALSWLV.

Belongs to the complex I subunit 5 family. NDH is composed of at least 16 different subunits, 5 of which are encoded in the nucleus.

Its subcellular location is the plastid. It localises to the organellar chromatophore thylakoid membrane. The catalysed reaction is a plastoquinone + NADH + (n+1) H(+)(in) = a plastoquinol + NAD(+) + n H(+)(out). It catalyses the reaction a plastoquinone + NADPH + (n+1) H(+)(in) = a plastoquinol + NADP(+) + n H(+)(out). NDH shuttles electrons from NAD(P)H:plastoquinone, via FMN and iron-sulfur (Fe-S) centers, to quinones in the photosynthetic chain and possibly in a chloroplast respiratory chain. The immediate electron acceptor for the enzyme in this species is believed to be plastoquinone. Couples the redox reaction to proton translocation, and thus conserves the redox energy in a proton gradient. This is NAD(P)H-quinone oxidoreductase subunit 5, organellar chromatophore 2 (ndhF2) from Paulinella chromatophora.